The primary structure comprises 63 residues: Large ribosomal subunit protein uL29 (63 aa).

Belongs to the universal ribosomal protein uL29 family.

The protein is Large ribosomal subunit protein uL29 of Shewanella frigidimarina (strain NCIMB 400).